The sequence spans 138 residues: Large ribosomal subunit protein uL16 (138 aa).

Basic residues predominate over residues 1–19 (MLIPRKVAHRKQHHPKRTG). Residues 1–22 (MLIPRKVAHRKQHHPKRTGAAK) are disordered.

It belongs to the universal ribosomal protein uL16 family. Part of the 50S ribosomal subunit.

Binds 23S rRNA and is also seen to make contacts with the A and possibly P site tRNAs. The chain is Large ribosomal subunit protein uL16 from Parafrankia sp. (strain EAN1pec).